The chain runs to 367 residues: tRNA 2-selenouridine synthase (367 aa).

Residues 12 to 136 (FLNDRPLMDA…LRGFLIDTLE (125 aa)) enclose the Rhodanese domain. Cys-95 acts as the S-selanylcysteine intermediate in catalysis.

This sequence belongs to the SelU family. As to quaternary structure, monomer.

It catalyses the reaction 5-methylaminomethyl-2-thiouridine(34) in tRNA + selenophosphate + (2E)-geranyl diphosphate + H2O + H(+) = 5-methylaminomethyl-2-selenouridine(34) in tRNA + (2E)-thiogeraniol + phosphate + diphosphate. The enzyme catalyses 5-methylaminomethyl-2-thiouridine(34) in tRNA + (2E)-geranyl diphosphate = 5-methylaminomethyl-S-(2E)-geranyl-thiouridine(34) in tRNA + diphosphate. The catalysed reaction is 5-methylaminomethyl-S-(2E)-geranyl-thiouridine(34) in tRNA + selenophosphate + H(+) = 5-methylaminomethyl-2-(Se-phospho)selenouridine(34) in tRNA + (2E)-thiogeraniol. It carries out the reaction 5-methylaminomethyl-2-(Se-phospho)selenouridine(34) in tRNA + H2O = 5-methylaminomethyl-2-selenouridine(34) in tRNA + phosphate. Functionally, involved in the post-transcriptional modification of the uridine at the wobble position (U34) of tRNA(Lys), tRNA(Glu) and tRNA(Gln). Catalyzes the conversion of 2-thiouridine (S2U-RNA) to 2-selenouridine (Se2U-RNA). Acts in a two-step process involving geranylation of 2-thiouridine (S2U) to S-geranyl-2-thiouridine (geS2U) and subsequent selenation of the latter derivative to 2-selenouridine (Se2U) in the tRNA chain. The protein is tRNA 2-selenouridine synthase of Pseudomonas fluorescens (strain Pf0-1).